The sequence spans 338 residues: MINSTSTQPPDESCSQNLLITQQIIPVLYCMVFIAGILLNGVSGWIFFYVPSSKSFIIYLKNIVIADFVMSLTFPFKILGDSGLGPWQLNVFVCRVSAVLFYVNMYVSIVFFGLISFDRYYKIVKPLWTSFIQSVSYSKLLSVIVWMLMLLLAVPNIILTNQSVREVTQIKCIELKSELGRKWHKASNYIFVAIFWIVFLLLIVFYTAITKKIFKSHLKSSRNSTSVKKKSSRNIFSIVFVFFVCFVPYHIARIPYTKSQTEAHYSCQSKEILRYMKEFTLLLSAANVCLDPIIYFFLCQPFREILCKKLHIPLKAQNDLDISRIKRGNTTLESTDTL.

Over 1 to 29 (MINSTSTQPPDESCSQNLLITQQIIPVLY) the chain is Extracellular. Residue Asn-3 is glycosylated (N-linked (GlcNAc...) asparagine). A helical transmembrane segment spans residues 30–50 (CMVFIAGILLNGVSGWIFFYV). Residues 51–55 (PSSKS) lie on the Cytoplasmic side of the membrane. The chain crosses the membrane as a helical span at residues 56–76 (FIIYLKNIVIADFVMSLTFPF). Topologically, residues 77–96 (KILGDSGLGPWQLNVFVCRV) are extracellular. A disulfide bond links Cys-94 and Cys-172. A helical transmembrane segment spans residues 97–117 (SAVLFYVNMYVSIVFFGLISF). Over 118–139 (DRYYKIVKPLWTSFIQSVSYSK) the chain is Cytoplasmic. The chain crosses the membrane as a helical span at residues 140-160 (LLSVIVWMLMLLLAVPNIILT). N-linked (GlcNAc...) asparagine glycosylation occurs at Asn-161. The Extracellular segment spans residues 161-188 (NQSVREVTQIKCIELKSELGRKWHKASN). A helical transmembrane segment spans residues 189–209 (YIFVAIFWIVFLLLIVFYTAI). Topologically, residues 210-234 (TKKIFKSHLKSSRNSTSVKKKSSRN) are cytoplasmic. Residues 235 to 255 (IFSIVFVFFVCFVPYHIARIP) form a helical membrane-spanning segment. The Extracellular segment spans residues 256 to 278 (YTKSQTEAHYSCQSKEILRYMKE). The helical transmembrane segment at 279–299 (FTLLLSAANVCLDPIIYFFLC) threads the bilayer. The Cytoplasmic segment spans residues 300 to 338 (QPFREILCKKLHIPLKAQNDLDISRIKRGNTTLESTDTL).

It belongs to the G-protein coupled receptor 1 family. Highest expression in the placenta, adipose tissue, stomach and intestine, intermediate levels in the brain, spleen, lung and heart, lowest levels in the kidney.

The protein localises to the cell membrane. In terms of biological role, receptor for UDP-glucose and other UDP-sugar coupled to G-proteins. Not activated by ATP, ADP, UTP or ATP. This is P2Y purinoceptor 14 (P2RY14) from Homo sapiens (Human).